The chain runs to 691 residues: DNA ligase (691 aa).

Residues 41 to 45, 90 to 91, and Glu130 contribute to the NAD(+) site; these read DAEYD and SL. The active-site N6-AMP-lysine intermediate is Lys132. NAD(+)-binding residues include Arg153, Glu190, Lys307, and Lys331. 4 residues coordinate Zn(2+): Cys425, Cys428, Cys443, and Cys449. In terms of domain architecture, BRCT spans 610–691; that stretch reads APQGVLAGKT…LHQLLEGNTQ (82 aa).

Belongs to the NAD-dependent DNA ligase family. LigA subfamily. Mg(2+) is required as a cofactor. Mn(2+) serves as cofactor.

The enzyme catalyses NAD(+) + (deoxyribonucleotide)n-3'-hydroxyl + 5'-phospho-(deoxyribonucleotide)m = (deoxyribonucleotide)n+m + AMP + beta-nicotinamide D-nucleotide.. In terms of biological role, DNA ligase that catalyzes the formation of phosphodiester linkages between 5'-phosphoryl and 3'-hydroxyl groups in double-stranded DNA using NAD as a coenzyme and as the energy source for the reaction. It is essential for DNA replication and repair of damaged DNA. The chain is DNA ligase from Burkholderia vietnamiensis (strain G4 / LMG 22486) (Burkholderia cepacia (strain R1808)).